A 40-amino-acid polypeptide reads, in one-letter code: Bacterioferritin heavy chain (40 aa).

In terms of domain architecture, Ferritin-like diiron spans M1 to Y40. E18 lines the Fe cation pocket.

This sequence belongs to the bacterioferritin family. In terms of assembly, oligomer consisting of two types of subunits: light chain and heavy chain.

May perform analogous functions in iron detoxification and storage to that of animal ferritins. Contains approximately 750 iron atoms per molecule. This Absidia spinosa protein is Bacterioferritin heavy chain.